The chain runs to 488 residues: Proline--tRNA ligase (488 aa).

The protein belongs to the class-II aminoacyl-tRNA synthetase family. ProS type 3 subfamily. Homodimer.

Its subcellular location is the cytoplasm. It carries out the reaction tRNA(Pro) + L-proline + ATP = L-prolyl-tRNA(Pro) + AMP + diphosphate. Its function is as follows. Catalyzes the attachment of proline to tRNA(Pro) in a two-step reaction: proline is first activated by ATP to form Pro-AMP and then transferred to the acceptor end of tRNA(Pro). This chain is Proline--tRNA ligase, found in Pyrobaculum arsenaticum (strain DSM 13514 / JCM 11321 / PZ6).